Here is a 90-residue protein sequence, read N- to C-terminus: Putative beta-neurotoxin RjAa2f (90 aa).

An N-terminal signal peptide occupies residues 1-18; it reads MKILIFIIASFMLIGVEC. The LCN-type CS-alpha/beta domain maps to 19–89; the sequence is KEGYPMGSDG…VWDSKTNKCG (71 aa). 4 disulfide bridges follow: C29–C88, C33–C62, C40–C69, and C44–C71.

The protein belongs to the long (4 C-C) scorpion toxin superfamily. Sodium channel inhibitor family. Beta subfamily. In terms of tissue distribution, expressed by the venom gland.

The protein resides in the secreted. Beta toxins bind voltage-independently at site-4 of sodium channels (Nav) and shift the voltage of activation toward more negative potentials thereby affecting sodium channel activation and promoting spontaneous and repetitive firing. In Rhopalurus junceus (Caribbean blue scorpion), this protein is Putative beta-neurotoxin RjAa2f.